The sequence spans 65 residues: MNMRNINVITVLSVPGKTVSDDFMHAVLSNCATRIVLPAPEKFGSESLPDNFNMTAVGVMKNSEI.

The polypeptide is Protein TrbD (trbD) (Escherichia coli (strain K12)).